A 579-amino-acid chain; its full sequence is Probable serine/threonine-protein kinase kinY (579 aa).

The segment at 1–24 (MINGEQTMVEDELPDQGKPMSDES) is disordered. The region spanning 32–309 (LKVGESIGSG…HVLKQLTSLF (278 aa)) is the Protein kinase domain. ATP-binding positions include 38 to 46 (IGSGAYGIV) and Lys-59. The active-site Proton acceptor is the Asp-167.

It belongs to the protein kinase superfamily. TKL Ser/Thr protein kinase family.

The enzyme catalyses L-seryl-[protein] + ATP = O-phospho-L-seryl-[protein] + ADP + H(+). The catalysed reaction is L-threonyl-[protein] + ATP = O-phospho-L-threonyl-[protein] + ADP + H(+). The protein is Probable serine/threonine-protein kinase kinY (kinY) of Dictyostelium discoideum (Social amoeba).